Reading from the N-terminus, the 156-residue chain is MPRKGNVQKREVLPDPIYNSKLVTRLINHMMMDGKRGTSTKIIYGAFDIIKNETGNDPVETFEEAMKNIMPVLEVKARRVGGSNYQVPIEVRPDRRTTLGLRWLVQYSRLRGEHTMVERLAREIMDAANNTGAAVKKREDTHRMADANRAFAHYRW.

It belongs to the universal ribosomal protein uS7 family. Part of the 30S ribosomal subunit. Contacts proteins S9 and S11.

One of the primary rRNA binding proteins, it binds directly to 16S rRNA where it nucleates assembly of the head domain of the 30S subunit. Is located at the subunit interface close to the decoding center, probably blocks exit of the E-site tRNA. This chain is Small ribosomal subunit protein uS7, found in Levilactobacillus brevis (strain ATCC 367 / BCRC 12310 / CIP 105137 / JCM 1170 / LMG 11437 / NCIMB 947 / NCTC 947) (Lactobacillus brevis).